The following is a 195-amino-acid chain: Imidazoleglycerol-phosphate dehydratase (195 aa).

It belongs to the imidazoleglycerol-phosphate dehydratase family.

It is found in the cytoplasm. It catalyses the reaction D-erythro-1-(imidazol-4-yl)glycerol 3-phosphate = 3-(imidazol-4-yl)-2-oxopropyl phosphate + H2O. It participates in amino-acid biosynthesis; L-histidine biosynthesis; L-histidine from 5-phospho-alpha-D-ribose 1-diphosphate: step 6/9. This chain is Imidazoleglycerol-phosphate dehydratase, found in Endomicrobium trichonymphae.